A 294-amino-acid chain; its full sequence is Putative glucose-6-phosphate 1-epimerase (294 aa).

Residues arginine 74 and arginine 99 each contribute to the substrate site. The active site involves histidine 164. Aspartate 208 is a binding site for substrate. Residue glutamate 267 is part of the active site.

This sequence belongs to the glucose-6-phosphate 1-epimerase family. Monomer in solution.

The catalysed reaction is alpha-D-glucose 6-phosphate = beta-D-glucose 6-phosphate. Probably functions as a hexose-6-phosphate 1-epimerase. This Salmonella typhimurium (strain LT2 / SGSC1412 / ATCC 700720) protein is Putative glucose-6-phosphate 1-epimerase.